The following is a 135-amino-acid chain: Lysozyme 2 (135 aa).

The first 18 residues, 1–18 (MNFLILFCVVASASVVYS), serve as a signal peptide directing secretion. Residues 19-135 (SISDQCLRCI…WRLVQAKGCS (117 aa)) form the I-type lysozyme domain. Cystine bridges form between C24-C100, C29-C35, C40-C49, C62-C82, C72-C78, and C96-C114. Residue E32 is the Proton donor of the active site. The active-site Nucleophile is the D43. Residue 55-61 (KQGYWTD) participates in substrate binding. Residues Y86 and 107-109 (HNG) each bind substrate.

As to expression, expressed in the epithelia of the basophil cells in the digestive tubules, but not in the epithelial cells lining the digestive ducts and stomach. Expressed at a much lower level in the style sac-midgut tissues. No expression detected in mantle, gills, labial palps or hemocytes.

The protein resides in the secreted. It catalyses the reaction Hydrolysis of (1-&gt;4)-beta-linkages between N-acetylmuramic acid and N-acetyl-D-glucosamine residues in a peptidoglycan and between N-acetyl-D-glucosamine residues in chitodextrins.. Its activity is regulated as follows. Activity decreased by 80% by addition of 0.01 M calcium, zinc or magnesium. Activity only decreased by 17% by addition of ammonium, and by 2% by addition of sodium. Functionally, the main role of this lysozyme is in digestion. Has antibacterial activity against the Gram-positive bacterium P.cerevisiae and the Gram-negative bacteria E.coli and V.vulnificus. Shows some chitinase activity but no isopeptidase activity. In Crassostrea virginica (Eastern oyster), this protein is Lysozyme 2.